The chain runs to 721 residues: MNMISYALLGVILGISGVIYAVYLAVWVLRQDPGNEKMRFISQAIATGARAYLFRQYRTLAVLLVILAVLILVAIDMPRRTFGLTALAFIVGALGSMLAGYLGMYVTTRSASRVAQAAATGGMGKALLVSWRAGAVMGLSLASIALLLISGFYLVFRSVLPDDWAVPLVALGFGASLVTLFMRVGGGIYTKAADLGADLVGKVEAGIPEDDPRNPGVIADNVGDNVGDVAGMAADVYESYIVTVTAAIFLAAILGLPTQFIEAIILFAALALVATFAGVNLLKTTGVKHPLSSISLAIYATIGLSVVLFFIGAFTLGLDSTKALALAATTSLGAVIAPLIVKITDYYTSYNYGPVRKIAEQAKISPATVIITGYGVGLMSAIPVIAVIVAVLGISYMIGYYTVPVSGFGELSKYLAGIFGTAMASVGLLVVAGIIITADSYGPVSDNAGGVVEMAGLPDEVREITDVLDSVGNTTKATTKGYAIASAALAALVLFIALIFEIVYSASKILGKGIVDMISESLSGLQLINANVLIGAFLGVALVYFFSSRTLEAVGRTAMEIVEEIRRQFREKPGILEWKEQPDYARVVDIATRRALGEFLIPGLAAIVLPLITGLLLGWNALAGLIMGAIVAGVPRALLMANAGGAWDNAKKYIEIQGLKKTEMHKAAVIGDTVGDPMKDTVGPSLNPLIKVLNTLSVVFTYVIVSTNIALGIWPSGLLPF.

Transmembrane regions (helical) follow at residues Leu-8 to Val-28, Tyr-57 to Met-77, Phe-82 to Leu-102, Val-136 to Phe-156, and Leu-168 to Ile-188. A substrate-binding site is contributed by Lys-191. Mg(2+) contacts are provided by Asp-194, Asp-198, Asn-221, and Asp-224. 5 helical membrane-spanning segments follow: residues Ala-247–Phe-267, Ile-294–Phe-314, Ala-323–Ile-343, Tyr-374–Ile-394, and Ala-416–Ile-436. Residue Asp-446 coordinates Mg(2+). 4 helical membrane passes run Ala-483–Val-503, Leu-527–Ser-547, Phe-599–Trp-619, and Ala-621–Ala-641. 3 residues coordinate Ca(2+): Asp-648, Asp-672, and Asp-676. Substrate is bound at residue Lys-679. A helical transmembrane segment spans residues Val-698–Leu-718.

Belongs to the H(+)-translocating pyrophosphatase (TC 3.A.10) family. K(+)-insensitive subfamily. Homodimer. Mg(2+) is required as a cofactor.

It is found in the cell membrane. The enzyme catalyses diphosphate + H2O + H(+)(in) = 2 phosphate + 2 H(+)(out). Proton pump that utilizes the energy of pyrophosphate hydrolysis as the driving force for proton movement across the membrane. Generates a proton motive force. The protein is K(+)-insensitive pyrophosphate-energized proton pump of Pyrobaculum aerophilum (strain ATCC 51768 / DSM 7523 / JCM 9630 / CIP 104966 / NBRC 100827 / IM2).